Consider the following 356-residue polypeptide: Protein RecA (356 aa).

68–75 is a binding site for ATP; the sequence is GPESSGKT.

Belongs to the RecA family.

It localises to the cytoplasm. Its function is as follows. Can catalyze the hydrolysis of ATP in the presence of single-stranded DNA, the ATP-dependent uptake of single-stranded DNA by duplex DNA, and the ATP-dependent hybridization of homologous single-stranded DNAs. It interacts with LexA causing its activation and leading to its autocatalytic cleavage. This is Protein RecA from Clostridium botulinum (strain Eklund 17B / Type B).